Here is a 446-residue protein sequence, read N- to C-terminus: MKRKDDDQEDRSCSSASKLDPIPLDLKMATVPTKSHMKKSHQNKLEEDEKEDTNPSKLELDSLPLDLKMAILTRIPAKSLMKLRCVSKMWSSIIRSRGFIDSYYAISSKQSRFIVGLSNAAFNEPEKQLTFLFSFSHEDGEKSSSSSLVPNFEMAVPCSLAGLSHSLASFHGILAVEGKVMCNPNTEQFTTLPVGTIFVGYDPIDDQYKALGFDFDKRCHGNAIGHKVWTLGGGEGMRQIRGDLAPYRPILLPNVCINGVIYYGAHTLSQTKDPVIVCFDVRSEKLSFITAPAVVLQSGMKSILIDYKGKLASIVRNSCGGCISSFVFWILEDPKKHEWSRQSCDFPYSLWDYVGNVRICFFGTNKAGEIIIAPMFLSRDVRSFYIFYYNVETKTMRRVRLRGIGSDIEFRRSYGSENKLCNCHVRIAHQHVESIAFLKDHINLRT.

2 stretches are compositionally biased toward basic and acidic residues: residues 1–12 (MKRKDDDQEDRS) and 43–57 (NKLE…NPSK). Positions 1–57 (MKRKDDDQEDRSCSSASKLDPIPLDLKMATVPTKSHMKKSHQNKLEEDEKEDTNPSK) are disordered. The F-box domain maps to 57-107 (KLELDSLPLDLKMAILTRIPAKSLMKLRCVSKMWSSIIRSRGFIDSYYAIS).

The protein is Putative F-box protein At1g32660 of Arabidopsis thaliana (Mouse-ear cress).